We begin with the raw amino-acid sequence, 342 residues long: tRNA dimethylallyltransferase (342 aa).

Residue 39-46 (GPTGSGKT) coordinates ATP. A substrate-binding site is contributed by 41–46 (TGSGKT). The interval 64–67 (DSMQ) is interaction with substrate tRNA.

This sequence belongs to the IPP transferase family. Monomer. It depends on Mg(2+) as a cofactor.

The catalysed reaction is adenosine(37) in tRNA + dimethylallyl diphosphate = N(6)-dimethylallyladenosine(37) in tRNA + diphosphate. Its function is as follows. Catalyzes the transfer of a dimethylallyl group onto the adenine at position 37 in tRNAs that read codons beginning with uridine, leading to the formation of N6-(dimethylallyl)adenosine (i(6)A). The chain is tRNA dimethylallyltransferase from Chlamydia felis (strain Fe/C-56) (Chlamydophila felis).